Here is a 299-residue protein sequence, read N- to C-terminus: Protease HtpX homolog (299 aa).

A run of 2 helical transmembrane segments spans residues 19–39 and 41–61; these read LFIVLFSLILFAVGYFFVWYF and WGITGIIFLAIFIVLYNWIAY. Histidine 146 provides a ligand contact to Zn(2+). Glutamate 147 is an active-site residue. Histidine 150 lines the Zn(2+) pocket. A run of 2 helical transmembrane segments spans residues 156–176 and 198–218; these read ILLMTVVAIVAGLIILLRDVF and IILLLIGLILSIIAPIVVLII. Residue glutamate 227 participates in Zn(2+) binding.

Belongs to the peptidase M48B family. It depends on Zn(2+) as a cofactor.

It is found in the cell membrane. The protein is Protease HtpX homolog of Caldanaerobacter subterraneus subsp. tengcongensis (strain DSM 15242 / JCM 11007 / NBRC 100824 / MB4) (Thermoanaerobacter tengcongensis).